Here is a 477-residue protein sequence, read N- to C-terminus: UDP-N-acetylmuramate--L-alanine ligase (477 aa).

An ATP-binding site is contributed by 122-128 (GTHGKTT).

It belongs to the MurCDEF family.

Its subcellular location is the cytoplasm. The catalysed reaction is UDP-N-acetyl-alpha-D-muramate + L-alanine + ATP = UDP-N-acetyl-alpha-D-muramoyl-L-alanine + ADP + phosphate + H(+). It functions in the pathway cell wall biogenesis; peptidoglycan biosynthesis. Cell wall formation. This chain is UDP-N-acetylmuramate--L-alanine ligase, found in Xanthomonas campestris pv. campestris (strain 8004).